Consider the following 224-residue polypeptide: 2-C-methyl-D-erythritol 4-phosphate cytidylyltransferase (224 aa).

It belongs to the IspD/TarI cytidylyltransferase family. IspD subfamily.

It catalyses the reaction 2-C-methyl-D-erythritol 4-phosphate + CTP + H(+) = 4-CDP-2-C-methyl-D-erythritol + diphosphate. The protein operates within isoprenoid biosynthesis; isopentenyl diphosphate biosynthesis via DXP pathway; isopentenyl diphosphate from 1-deoxy-D-xylulose 5-phosphate: step 2/6. Catalyzes the formation of 4-diphosphocytidyl-2-C-methyl-D-erythritol from CTP and 2-C-methyl-D-erythritol 4-phosphate (MEP). This chain is 2-C-methyl-D-erythritol 4-phosphate cytidylyltransferase, found in Saccharopolyspora erythraea (strain ATCC 11635 / DSM 40517 / JCM 4748 / NBRC 13426 / NCIMB 8594 / NRRL 2338).